Reading from the N-terminus, the 192-residue chain is MNFLLTWIHWGLAALLYFHNAKVLQAAPAHGDGDRQQSEVIPFMTVYERSVCRPIETMVDIFQEYPDEVEYILKPPCVALMRCGGCCNDEALECVPTELYNVTMEIMKLKPYQSQHIHPMSFQQHSKCECRPKKETRIIQENHCEPCSERRKHLYKQDPLTCKCSCKFTDSRCKSKQLELNERTCRCEKPRR.

The first 26 residues, 1–26 (MNFLLTWIHWGLAALLYFHNAKVLQA), serve as a signal peptide directing secretion. Disulfide bonds link C52–C94, C83–C128, and C87–C130. N101 carries N-linked (GlcNAc...) asparagine glycosylation.

This sequence belongs to the PDGF/VEGF growth factor family. As to quaternary structure, homodimer; disulfide-linked. Also found as heterodimer with PGF. Interacts with FLT1/VEGFR1 and KDR/VEGFR2 receptors, heparan sulfate and heparin. As to expression, expressed by the venom gland, and probably other tissues.

It is found in the secreted. In terms of biological role, growth factor active in angiogenesis, vasculogenesis and endothelial cell growth. Induces endothelial cell proliferation, promotes cell migration, inhibits apoptosis and induces permeabilization of blood vessels. The sequence is that of Vascular endothelial growth factor A from Agkistrodon piscivorus piscivorus (Eastern cottonmouth).